The chain runs to 429 residues: SH2 domain-containing protein 5 (429 aa).

Residues 302 to 398 form the SH2 domain; sequence WAFAGLSRSC…LSMGRLNPTY (97 aa).

As to quaternary structure, interacts with BCR. Highly expressed in brain, particularly in Purkinjie cells in the cerebellum and the cornu ammonis of the hippocampus.

The protein resides in the postsynaptic density. Its function is as follows. May be involved in synaptic plasticity regulation through the control of Rac-GTP levels. The sequence is that of SH2 domain-containing protein 5 from Mus musculus (Mouse).